A 251-amino-acid polypeptide reads, in one-letter code: Triosephosphate isomerase (251 aa).

8-10 contributes to the substrate binding site; it reads NWK. His97 serves as the catalytic Electrophile. The Proton acceptor role is filled by Glu170. Substrate-binding positions include Gly176, Ser215, and 236-237; that span reads GG.

The protein belongs to the triosephosphate isomerase family. Homodimer.

The protein localises to the cytoplasm. The catalysed reaction is D-glyceraldehyde 3-phosphate = dihydroxyacetone phosphate. It functions in the pathway carbohydrate biosynthesis; gluconeogenesis. The protein operates within carbohydrate degradation; glycolysis; D-glyceraldehyde 3-phosphate from glycerone phosphate: step 1/1. Its function is as follows. Involved in the gluconeogenesis. Catalyzes stereospecifically the conversion of dihydroxyacetone phosphate (DHAP) to D-glyceraldehyde-3-phosphate (G3P). This chain is Triosephosphate isomerase, found in Nitratidesulfovibrio vulgaris (strain DSM 19637 / Miyazaki F) (Desulfovibrio vulgaris).